A 300-amino-acid polypeptide reads, in one-letter code: Energy-coupling factor transporter ATP-binding protein EcfA2 (300 aa).

The ABC transporter domain occupies 3 to 258 (IKAKNIVKIY…NKFLIENKML (256 aa)). Residue 40-47 (GQTGSGKT) participates in ATP binding.

Belongs to the ABC transporter superfamily. Energy-coupling factor EcfA family. As to quaternary structure, forms a stable energy-coupling factor (ECF) transporter complex composed of 2 membrane-embedded substrate-binding proteins (S component), 2 ATP-binding proteins (A component) and 2 transmembrane proteins (T component).

It is found in the cell membrane. Its function is as follows. ATP-binding (A) component of a common energy-coupling factor (ECF) ABC-transporter complex. Unlike classic ABC transporters this ECF transporter provides the energy necessary to transport a number of different substrates. The chain is Energy-coupling factor transporter ATP-binding protein EcfA2 from Mesomycoplasma hyopneumoniae (strain 7448) (Mycoplasma hyopneumoniae).